The sequence spans 144 residues: MKMNTLKPAEGSKQSPKRLGRGIGSGLGKTGGRGHKGQTSRSGGTIRPGFEGGQQPLQRRLPKFGFTSRVGRFSEEVRLSEIDSLGTDIIDLAALKAANIVDQQAKQVKVILSGEITRAVTVKGLKVTKGAQEAIQAAGGKVEE.

The disordered stretch occupies residues 1 to 60 (MKMNTLKPAEGSKQSPKRLGRGIGSGLGKTGGRGHKGQTSRSGGTIRPGFEGGQQPLQRR). Positions 21–31 (RGIGSGLGKTG) are enriched in gly residues.

Belongs to the universal ribosomal protein uL15 family. In terms of assembly, part of the 50S ribosomal subunit.

Its function is as follows. Binds to the 23S rRNA. This Hahella chejuensis (strain KCTC 2396) protein is Large ribosomal subunit protein uL15.